Consider the following 925-residue polypeptide: Probable glycoprotein hormone G-protein coupled receptor (925 aa).

The signal sequence occupies residues 1–27 (MEDRGICPRVLQVLFLVVLILISPVYA). The Extracellular portion of the chain corresponds to 28–529 (AKNDACTKCS…EDIMGYVWLT (502 aa)). The N-linked (GlcNAc...) asparagine glycan is linked to asparagine 61. LRR repeat units lie at residues 85 to 106 (KLKYLTLNNNKIKNIAKFRVKN), 110 to 131 (SLITLSYTHNIIETIENGAFDD), 134 to 155 (QLTQLDLSNNRLKEFPIFNKTS), 156 to 180 (SVTKLYLRGNPGITKLPRQSLGNLP), 181 to 202 (SLENLFMERTGIQEIPAGIFRQ), 203 to 224 (NTRLINLYFNKTKALERINEDA), 230 to 250 (SLKTLVLDETSVTSLPSRGLK), and 251 to 273 (NLHFLSLKDVPNFWQLPELDSIR). N-linked (GlcNAc...) asparagine glycosylation is present at asparagine 152. An N-linked (GlcNAc...) asparagine glycan is attached at asparagine 212. The segment at 299 to 493 (TMQKPSTEEN…PTLIPHSNHT (195 aa)) is disordered. The span at 301–318 (QKPSTEENNGQTTASSPT) shows a compositional bias: polar residues. The 1; truncated repeat unit spans residues 333-349 (STQPHTTSGFGGGGFPG). Positions 333 to 461 (STQPHTTSGF…PGGGGFPGGG (129 aa)) are 5 X approximate tandem repeats. Over residues 341–362 (GFGGGGFPGGGGGFPGGGGFPA) the composition is skewed to gly residues. Tandem repeats lie at residues 350-384 (GGGGFPGGGGFPAGGSKTSTQPHTTSGFGGGGFPG), 385-419 (GGGGFPGGGGFPAGGSKTSTQPHTTSGFGGGGFPG), and 420-453 (GGGGFPGGGGFPGGSNTSTQPHTTSNSGGGGFPG). A compositionally biased stretch (polar residues) spans 365–375 (SKTSTQPHTTS). Gly residues predominate over residues 376-397 (GFGGGGFPGGGGGFPGGGGFPA). The span at 400-410 (SKTSTQPHTTS) shows a compositional bias: polar residues. Gly residues predominate over residues 411–432 (GFGGGGFPGGGGGFPGGGGFPG). The segment covering 434–445 (SNTSTQPHTTSN) has biased composition (polar residues). The N-linked (GlcNAc...) asparagine glycan is linked to asparagine 435. Gly residues predominate over residues 446–462 (SGGGGFPGGGGFPGGGT). A 5; truncated repeat occupies 454-461 (GGGFPGGG). Polar residues predominate over residues 476-493 (VHQSTADPPTLIPHSNHT). Residue asparagine 495 is glycosylated (N-linked (GlcNAc...) asparagine). A helical membrane pass occupies residues 530–551 (VVSFMVGAVALVANLVVALVLL). Residues 552–561 (TSQRRLNVTR) lie on the Cytoplasmic side of the membrane. Residues 562–584 (FLMCNLAFADFILGLYIFILTSV) form a helical membrane-spanning segment. Over 585–606 (SAVTRGDYHNYVQQWQNGAGCK) the chain is Extracellular. A helical membrane pass occupies residues 607-628 (ILGFLAVFSSELSLFTLVMMTI). Topologically, residues 629–651 (ERFYAIVHAMHMNARLSFRKTVR) are cytoplasmic. A helical membrane pass occupies residues 652–673 (FMIGGWIFALVMAVVPLTGVSG). Over 674–691 (YSKVAICLPFDVSDATST) the chain is Extracellular. Residues 692-712 (AYVAFLLLVNGASFISVMYLY) form a helical membrane-spanning segment. Over 713 to 739 (SRMLYVVVSGGDMEGAPKRNDSKVAKR) the chain is Cytoplasmic. A helical membrane pass occupies residues 740 to 763 (MAILVFTDMLCWAPIAFFGLLAAF). The Extracellular segment spans residues 764–774 (GQTLLTVTQSK). Residues 775 to 795 (ILLVFFFPINSICNPFLYAFF) traverse the membrane as a helical segment. Residues 796 to 925 (TKAFKRELFT…QKQKILQSPS (130 aa)) are Cytoplasmic-facing. The disordered stretch occupies residues 904–925 (VTKSSSPPHLKLQKQKILQSPS).

Belongs to the G-protein coupled receptor 1 family. FSH/LSH/TSH subfamily.

It is found in the cell membrane. Probable receptor for a glycoprotein hormone. In Anthopleura elegantissima (Green aggregating anemone), this protein is Probable glycoprotein hormone G-protein coupled receptor.